The sequence spans 507 residues: Sterol 14-alpha demethylase CYP51A (507 aa).

The helical transmembrane segment at 7-29 (YPLWVLVALFAVIIANLLYQQLP) threads the bilayer. Tyrosine 105 serves as a coordination point for lanosterol. Heme is bound at residue cysteine 449.

Belongs to the cytochrome P450 family. The cofactor is heme.

Its subcellular location is the endoplasmic reticulum membrane. The enzyme catalyses a 14alpha-methyl steroid + 3 reduced [NADPH--hemoprotein reductase] + 3 O2 = a Delta(14) steroid + formate + 3 oxidized [NADPH--hemoprotein reductase] + 4 H2O + 4 H(+). It carries out the reaction a 14alpha-methyl steroid + reduced [NADPH--hemoprotein reductase] + O2 = a 14alpha-hydroxymethyl steroid + oxidized [NADPH--hemoprotein reductase] + H2O + H(+). The catalysed reaction is a 14alpha-hydroxymethyl steroid + reduced [NADPH--hemoprotein reductase] + O2 = a 14alpha-formyl steroid + oxidized [NADPH--hemoprotein reductase] + 2 H2O + H(+). It catalyses the reaction a 14alpha-formyl steroid + reduced [NADPH--hemoprotein reductase] + O2 = a Delta(14) steroid + formate + oxidized [NADPH--hemoprotein reductase] + H2O + 2 H(+). The enzyme catalyses lanosterol + 3 reduced [NADPH--hemoprotein reductase] + 3 O2 = 4,4-dimethyl-5alpha-cholesta-8,14,24-trien-3beta-ol + formate + 3 oxidized [NADPH--hemoprotein reductase] + 4 H2O + 4 H(+). It carries out the reaction lanosterol + reduced [NADPH--hemoprotein reductase] + O2 = 32-hydroxylanosterol + oxidized [NADPH--hemoprotein reductase] + H2O + H(+). The catalysed reaction is 32-hydroxylanosterol + reduced [NADPH--hemoprotein reductase] + O2 = 32-oxolanosterol + oxidized [NADPH--hemoprotein reductase] + 2 H2O + H(+). It catalyses the reaction 32-oxolanosterol + reduced [NADPH--hemoprotein reductase] + O2 = 4,4-dimethyl-5alpha-cholesta-8,14,24-trien-3beta-ol + formate + oxidized [NADPH--hemoprotein reductase] + H2O + 2 H(+). The enzyme catalyses eburicol + 3 reduced [NADPH--hemoprotein reductase] + 3 O2 = 14-demethyleburicol + formate + 3 oxidized [NADPH--hemoprotein reductase] + 4 H2O + 4 H(+). It carries out the reaction eburicol + reduced [NADPH--hemoprotein reductase] + O2 = 32-hydroxyeburicol + oxidized [NADPH--hemoprotein reductase] + H2O + H(+). The catalysed reaction is 32-hydroxyeburicol + reduced [NADPH--hemoprotein reductase] + O2 = 32-oxoeburicol + oxidized [NADPH--hemoprotein reductase] + 2 H2O + H(+). It catalyses the reaction 32-oxoeburicol + reduced [NADPH--hemoprotein reductase] + O2 = 14-demethyleburicol + formate + oxidized [NADPH--hemoprotein reductase] + H2O + 2 H(+). It participates in steroid metabolism; ergosterol biosynthesis. Functionally, together with cyp51B and cyp51C, encodes the sterol 14alpha-demethylase that plays a critical role in the third module of ergosterol biosynthesis pathway, being ergosterol the major sterol component in fungal membranes that participates in a variety of functions. CYP51A encodes the sterol 14-alpha-demethylase induced on ergosterol depletion and is responsible for the intrinsic variation in azole sensitivity. The third module or late pathway involves the ergosterol synthesis itself through consecutive reactions that mainly occur in the endoplasmic reticulum (ER) membrane. In filamentous fungi, during the initial step of this module, lanosterol (lanosta-8,24-dien-3beta-ol) can be metabolized to eburicol. Sterol 14alpha-demethylase catalyzes the three-step oxidative removal of the 14alpha-methyl group (C-32) of both these sterols in the form of formate, and converts eburicol and lanosterol to 14-demethyleburicol (4,4,24-trimethylergosta-8,14,24(28)-trienol) and 4,4-dimethyl-5alpha-cholesta-8,14,24-trien-3beta-ol, respectively, which are further metabolized by other enzymes in the pathway to ergosterol. Can also use substrates not intrinsic to fungi, such as 24,25-dihydrolanosterol (DHL), producing 4,4'-dimethyl-8,14-cholestadien-3-beta-ol, but at lower rates than the endogenous substrates. In Gibberella zeae (strain ATCC MYA-4620 / CBS 123657 / FGSC 9075 / NRRL 31084 / PH-1) (Wheat head blight fungus), this protein is Sterol 14-alpha demethylase CYP51A.